The sequence spans 389 residues: Glutamate 5-kinase (389 aa).

K16 contacts ATP. Substrate contacts are provided by S56, D143, and N155. An ATP-binding site is contributed by 175 to 176 (SD). The PUA domain occupies 281–358 (AGELHVDDGA…AEIETILGYP (78 aa)).

This sequence belongs to the glutamate 5-kinase family.

It localises to the cytoplasm. It catalyses the reaction L-glutamate + ATP = L-glutamyl 5-phosphate + ADP. Its pathway is amino-acid biosynthesis; L-proline biosynthesis; L-glutamate 5-semialdehyde from L-glutamate: step 1/2. In terms of biological role, catalyzes the transfer of a phosphate group to glutamate to form L-glutamate 5-phosphate. The chain is Glutamate 5-kinase from Rhizobium johnstonii (strain DSM 114642 / LMG 32736 / 3841) (Rhizobium leguminosarum bv. viciae).